We begin with the raw amino-acid sequence, 249 residues long: V-type proton ATPase subunit D 2 (249 aa).

It belongs to the V-ATPase D subunit family. As to quaternary structure, V-ATPase is a heteromultimeric enzyme made up of two complexes: the ATP-hydrolytic V1 complex and the proton translocation V0 complex. The V1 complex consists of three catalytic AB heterodimers that form a heterohexamer, three peripheral stalks each consisting of EG heterodimers, one central rotor including subunits D and F, and the regulatory subunits C and H. The proton translocation complex V0 consists of the proton transport subunit a, a ring of proteolipid subunits c9c'', rotary subunit d, subunits e and f, and the accessory subunits VhaAC45 and ATP6AP2.

Functionally, subunit of the V1 complex of vacuolar(H+)-ATPase (V-ATPase), a multisubunit enzyme composed of a peripheral complex (V1) that hydrolyzes ATP and a membrane integral complex (V0) that translocates protons. V-ATPase is responsible for acidifying and maintaining the pH of intracellular compartments and in some cell types, is targeted to the plasma membrane, where it is responsible for acidifying the extracellular environment. The chain is V-type proton ATPase subunit D 2 (Vha36-3) from Drosophila melanogaster (Fruit fly).